The chain runs to 81 residues: Cytotoxin 3b (81 aa).

The first 21 residues, 1 to 21 (MKTLLLTLVVVTIVCLDLGYT), serve as a signal peptide directing secretion. Intrachain disulfides connect Cys24–Cys42, Cys35–Cys59, Cys63–Cys74, and Cys75–Cys80.

It belongs to the three-finger toxin family. Short-chain subfamily. Type IA cytotoxin sub-subfamily. In terms of assembly, monomer in solution; Homodimer and oligomer in the presence of negatively charged lipids forming a pore with a size ranging between 20 and 30 Angstroms. Expressed by the venom gland.

The protein resides in the secreted. Its subcellular location is the target cell membrane. Its function is as follows. Shows cytolytic activity on many different cells by forming pore in lipid membranes. In vivo, increases heart rate or kills the animal by cardiac arrest. In addition, it binds to heparin with high affinity, interacts with Kv channel-interacting protein 1 (KCNIP1) in a calcium-independent manner, and binds to integrin alpha-V/beta-3 (ITGAV/ITGB3) with moderate affinity. This chain is Cytotoxin 3b, found in Naja atra (Chinese cobra).